The sequence spans 1460 residues: DNA-directed RNA polymerase III subunit RPC1 (1460 aa).

Zn(2+)-binding residues include cysteine 67, cysteine 70, cysteine 77, histidine 80, cysteine 107, cysteine 110, and cysteine 154. Mg(2+) is bound by residues aspartate 511, aspartate 513, and aspartate 515. Residues 858–870 form a bridging helix region; sequence PPEFLFHAISGRE.

It belongs to the RNA polymerase beta' chain family. As to quaternary structure, component of the RNA polymerase III (Pol III) complex consisting of 17 subunits.

It localises to the nucleus. The enzyme catalyses RNA(n) + a ribonucleoside 5'-triphosphate = RNA(n+1) + diphosphate. DNA-dependent RNA polymerase catalyzes the transcription of DNA into RNA using the four ribonucleoside triphosphates as substrates. Largest and catalytic core component of RNA polymerase III which synthesizes small RNAs, such as 5S rRNA and tRNAs. Forms the polymerase active center together with the second largest subunit. A single-stranded DNA template strand of the promoter is positioned within the central active site cleft of Pol III. A bridging helix emanates from RPC1 and crosses the cleft near the catalytic site and is thought to promote translocation of Pol III by acting as a ratchet that moves the RNA-DNA hybrid through the active site by switching from straight to bent conformations at each step of nucleotide addition. The sequence is that of DNA-directed RNA polymerase III subunit RPC1 (RPO31) from Saccharomyces cerevisiae (strain ATCC 204508 / S288c) (Baker's yeast).